Consider the following 134-residue polypeptide: Small ribosomal subunit protein uS8c (134 aa).

Belongs to the universal ribosomal protein uS8 family. In terms of assembly, part of the 30S ribosomal subunit.

It localises to the plastid. One of the primary rRNA binding proteins, it binds directly to 16S rRNA central domain where it helps coordinate assembly of the platform of the 30S subunit. The sequence is that of Small ribosomal subunit protein uS8c (rps8) from Epifagus virginiana (Beechdrops).